Consider the following 520-residue polypeptide: Cholesterol side-chain cleavage enzyme, mitochondrial (520 aa).

A mitochondrion-targeting transit peptide spans 1 to 39; the sequence is MLARGLPLRSALVKACPPILSTVGEGWGHHRVGTGEGAG. Heme is bound at residue cysteine 461.

This sequence belongs to the cytochrome P450 family. In terms of assembly, interacts with FDX1/adrenodoxin. It depends on heme as a cofactor. As to expression, detected in adrenal cortex and corpus luteum (at protein level).

It localises to the mitochondrion inner membrane. It catalyses the reaction 6 reduced [adrenodoxin] + cholesterol + 3 O2 + 6 H(+) = 4-methylpentanal + pregnenolone + 6 oxidized [adrenodoxin] + 4 H2O. It carries out the reaction 2 reduced [adrenodoxin] + cholesterol + O2 + 2 H(+) = (22R)-hydroxycholesterol + 2 oxidized [adrenodoxin] + H2O. The enzyme catalyses (22R)-hydroxycholesterol + 2 reduced [adrenodoxin] + O2 + 2 H(+) = (20R,22R)-20,22-dihydroxycholesterol + 2 oxidized [adrenodoxin] + H2O. The catalysed reaction is (20R,22R)-20,22-dihydroxycholesterol + 2 reduced [adrenodoxin] + O2 + 2 H(+) = 4-methylpentanal + pregnenolone + 2 oxidized [adrenodoxin] + 2 H2O. The protein operates within lipid metabolism; C21-steroid hormone metabolism. It participates in steroid metabolism; cholesterol metabolism. Its function is as follows. A cytochrome P450 monooxygenase that catalyzes the side-chain hydroxylation and cleavage of cholesterol to pregnenolone, the precursor of most steroid hormones. Catalyzes three sequential oxidation reactions of cholesterol, namely the hydroxylation at C22 followed with the hydroxylation at C20 to yield 20R,22R-hydroxycholesterol that is further cleaved between C20 and C22 to yield the C21-steroid pregnenolone and 4-methylpentanal. Mechanistically, uses molecular oxygen inserting one oxygen atom into a substrate and reducing the second into a water molecule. Two electrons are provided by NADPH via a two-protein mitochondrial transfer system comprising flavoprotein FDXR (adrenodoxin/ferredoxin reductase) and nonheme iron-sulfur protein FDX1 or FDX2 (adrenodoxin/ferredoxin). The chain is Cholesterol side-chain cleavage enzyme, mitochondrial (CYP11A1) from Bos taurus (Bovine).